Here is a 566-residue protein sequence, read N- to C-terminus: E3 ubiquitin-protein ligase RNF220 (566 aa).

Residue Lys277 forms a Glycyl lysine isopeptide (Lys-Gly) (interchain with G-Cter in SUMO2) linkage. Residues 277–297 form a disordered region; it reads KREGESPTASPHSSATDDLHH. Residue Ser390 is modified to Phosphoserine. A coiled-coil region spans residues 485 to 513; the sequence is EDSAVTTFEALKARVRELERQLSRGDRYK. The required for targeting to the cytoplasm stretch occupies residues 514-522; sequence CLICMDSYS. The segment at 514–553 adopts an RING-type zinc-finger fold; the sequence is CLICMDSYSMPLTSIQCWHVHCEECWLRTLGAKKLCPQCN.

Interacts with SIN3B. Interacts with CTNNB1 (via Armadillo repeats 2-8). Interacts with USP7 (via MATH domain). Auto-ubiquitinated; leads to proteasomal degradation.

It localises to the cytoplasm. The protein localises to the nucleus. The catalysed reaction is S-ubiquitinyl-[E2 ubiquitin-conjugating enzyme]-L-cysteine + [acceptor protein]-L-lysine = [E2 ubiquitin-conjugating enzyme]-L-cysteine + N(6)-ubiquitinyl-[acceptor protein]-L-lysine.. It functions in the pathway protein modification; protein ubiquitination. In terms of biological role, E3 ubiquitin-protein ligase that promotes the ubiquitination and proteasomal degradation of SIN3B. Independently of its E3 ligase activity, acts as a CTNNB1 stabilizer through USP7-mediated deubiquitination of CTNNB1 and promotes Wnt signaling. Plays a critical role in the regulation of nuclear lamina. This Macaca fascicularis (Crab-eating macaque) protein is E3 ubiquitin-protein ligase RNF220 (RNF220).